Here is a 354-residue protein sequence, read N- to C-terminus: Deoxyribonuclease-2-beta (354 aa).

Residues 1-22 form the signal peptide; it reads MTAKPLRTVLSLLFFALSGVLG. N-linked (GlcNAc...) asparagine glycans are attached at residues Asn70, Asn77, Asn95, Asn98, Asn114, Asn129, Asn208, Asn271, and Asn319.

This sequence belongs to the DNase II family. In terms of tissue distribution, highly expressed in the eye lens. Detected in liver, but not in the other tissues tested.

The protein localises to the lysosome. It carries out the reaction Endonucleolytic cleavage to nucleoside 3'-phosphates and 3'-phosphooligonucleotide end-products.. Hydrolyzes DNA under acidic conditions. Does not require divalent cations for activity. Participates in the degradation of nuclear DNA during lens cell differentiation. The protein is Deoxyribonuclease-2-beta (Dnase2b) of Mus musculus (Mouse).